Reading from the N-terminus, the 653-residue chain is Beta-galactosidase (653 aa).

A signal peptide spans 1–22; the sequence is MPGVVRLLALLLVPLLLGSARG. Positions 23–27 are excised as a propeptide; that stretch reads LHNAT. N-linked (GlcNAc...) asparagine glycosylation occurs at Asn-25. Tyr-82 contacts substrate. The N-linked (GlcNAc...) asparagine glycan is linked to Asn-96. Positions 128 and 186 each coordinate substrate. Glu-187 acts as the Proton donor in catalysis. Residues Cys-194 and Cys-229 are joined by a disulfide bond. Residue Asn-246 is glycosylated (N-linked (GlcNAc...) asparagine). Glu-267 serves as the catalytic Nucleophile. Tyr-332 lines the substrate pocket. Asn-463, Asn-497, and Asn-554 each carry an N-linked (GlcNAc...) asparagine glycan. Cys-625 and Cys-633 are joined by a disulfide.

Belongs to the glycosyl hydrolase 35 family. Homodimer. May form higher multimers.

It is found in the lysosome. It catalyses the reaction Hydrolysis of terminal non-reducing beta-D-galactose residues in beta-D-galactosides.. Cleaves beta-linked terminal galactosyl residues from gangliosides, glycoproteins, and glycosaminoglycans. The chain is Beta-galactosidase (GLB1) from Bos taurus (Bovine).